The chain runs to 167 residues: Protein tyrosine phosphatase type IVA 2 (167 aa).

A Tyrosine-protein phosphatase domain is found at 5–158 (APVEISYENM…YRPKMRLRFR (154 aa)). A disulfide bridge connects residues cysteine 46 and cysteine 101. Aspartate 69 (proton donor) is an active-site residue. Catalysis depends on cysteine 101, which acts as the Phosphocysteine intermediate. 102-107 (VAGLGR) is a phosphate binding site. Arginine 107 serves as a coordination point for substrate. The residue at position 164 (cysteine 164) is a Cysteine methyl ester. Cysteine 164 carries the S-farnesyl cysteine lipid modification. Positions 165 to 167 (CVQ) are cleaved as a propeptide — removed in mature form.

Belongs to the protein-tyrosine phosphatase family. As to quaternary structure, in contrast to PTP4A1 and PTP4A3, does not interact with tubulin. Interacts with RABGGTB. In terms of processing, farnesylated. Farnesylation is required for membrane targeting and for interaction with RABGGTB. In terms of tissue distribution, expressed in skeletal muscle, and at lower levels in liver, lung, heart, kidney, brain, testis and spleen.

The protein localises to the cell membrane. It is found in the early endosome. It localises to the cytoplasm. It carries out the reaction O-phospho-L-tyrosyl-[protein] + H2O = L-tyrosyl-[protein] + phosphate. With respect to regulation, inhibited by sodium orthovanadate and pentamidine. Its function is as follows. Protein tyrosine phosphatase which stimulates progression from G1 into S phase during mitosis. Inhibits geranylgeranyl transferase type II activity by blocking the association between RABGGTA and RABGGTB. This chain is Protein tyrosine phosphatase type IVA 2 (Ptp4a2), found in Mus musculus (Mouse).